Consider the following 200-residue polypeptide: Ras-related protein Rab-10 (200 aa).

Residues Ser18, Gly19, Val20, Gly21, Lys22, Thr23, Cys24, Asn35, Thr36, Ser40, and Thr41 each coordinate GTP. Thr23 lines the Mg(2+) pocket. 2 consecutive short sequence motifs (switch) follow at residues 32–46 (DAFN…GIDF) and 64–81 (DTAG…YYRG). Positions 41 and 64 each coordinate Mg(2+). Residues Gly67, Asn122, Lys123, Asp125, Met126, Ser152, Ala153, and Lys154 each coordinate GTP. A disordered region spans residues 181–200 (RENVDISTTGGGTGLKKCCS). 2 S-geranylgeranyl cysteine lipidation sites follow: Cys198 and Cys199.

This sequence belongs to the small GTPase superfamily. Rab family. Mg(2+) serves as cofactor.

It localises to the cytoplasmic vesicle membrane. Its subcellular location is the golgi apparatus. The protein resides in the trans-Golgi network membrane. The protein localises to the endosome membrane. It is found in the recycling endosome membrane. It localises to the cytoplasmic vesicle. Its subcellular location is the phagosome membrane. The protein resides in the cell projection. The protein localises to the cilium. It is found in the endoplasmic reticulum membrane. The catalysed reaction is GTP + H2O = GDP + phosphate + H(+). With respect to regulation, regulated by guanine nucleotide exchange factors (GEFs) which promote the exchange of bound GDP for free GTP. Regulated by GTPase activating proteins (GAPs) which increase the GTP hydrolysis activity. Inhibited by GDP dissociation inhibitors (GDIs) which prevent Rab-GDP dissociation. The small GTPases Rab are key regulators of intracellular membrane trafficking, from the formation of transport vesicles to their fusion with membranes. Rabs cycle between an inactive GDP-bound form and an active GTP-bound form that is able to recruit to membranes different set of downstream effectors directly responsible for vesicle formation, movement, tethering and fusion. That Rab is mainly involved in the biosynthetic transport of proteins from the Golgi to the plasma membrane. Also plays a specific role in asymmetric protein transport to the plasma membrane within the polarized neuron and epithelial cells. In neurons, it is involved in axonogenesis through regulation of vesicular membrane trafficking toward the axonal plasma membrane while in epithelial cells, it regulates transport from the Golgi to the basolateral membrane. Moreover, may play a role in the basolateral recycling pathway and in phagosome maturation. Finally, may play a role in endoplasmic reticulum dynamics and morphology controlling tubulation along microtubules and tubules fusion. May participate in the export of neosynthesized proteins through a Rab-dependent endosomal export route. This chain is Ras-related protein Rab-10, found in Diplobatis ommata (Ocellated electric ray).